Consider the following 603-residue polypeptide: Dual specificity protein phosphatase CDC14A (603 aa).

The a stretch occupies residues 7 to 162; sequence ELIGACEFMK…GLQHGFFDFE (156 aa). The interval 163–176 is linker; that stretch reads TFDAEEYEHYERVE. The interval 177–343 is b; it reads NGDFNWIVPG…QGDIFRSKLK (167 aa). The 158-residue stretch at 179 to 336 folds into the Tyrosine-protein phosphatase domain; the sequence is DFNWIVPGKF…KQASLWVQGD (158 aa). Cysteine 278 functions as the Phosphocysteine intermediate in the catalytic mechanism. Serine 484 bears the Phosphoserine mark. Polar residues predominate over residues 518 to 538; the sequence is NGSTQTPGRNYPELNNNQYTR. The segment at 518-583 is disordered; the sequence is NGSTQTPGRN…RPSFPGSLSS (66 aa). Composition is skewed to low complexity over residues 539 to 558 and 573 to 583; these read SSNS…LNSS and LRPSFPGSLSS. Phosphoserine is present on serine 592.

This sequence belongs to the protein-tyrosine phosphatase family. Non-receptor class CDC14 subfamily. In terms of assembly, interacts with KIF20A. Interaction is required to localize CDC14 to the midzone of the mitotic spindle. As to expression, expressed in the inner ear.

It is found in the nucleus. The protein resides in the cytoplasm. The protein localises to the cytoskeleton. It localises to the microtubule organizing center. Its subcellular location is the centrosome. It is found in the spindle. The protein resides in the cell projection. The protein localises to the kinocilium. It localises to the spindle pole. Its subcellular location is the stereocilium. The catalysed reaction is O-phospho-L-tyrosyl-[protein] + H2O = L-tyrosyl-[protein] + phosphate. The enzyme catalyses O-phospho-L-seryl-[protein] + H2O = L-seryl-[protein] + phosphate. It catalyses the reaction O-phospho-L-threonyl-[protein] + H2O = L-threonyl-[protein] + phosphate. Functionally, dual-specificity phosphatase. Required for centrosome separation and productive cytokinesis during cell division. Dephosphorylates SIRT2 around early anaphase. May dephosphorylate the APC subunit FZR1/CDH1, thereby promoting APC-FZR1 dependent degradation of mitotic cyclins and subsequent exit from mitosis. Required for normal hearing. This Mus musculus (Mouse) protein is Dual specificity protein phosphatase CDC14A (Cdc14a).